A 351-amino-acid chain; its full sequence is Nicotinate-nucleotide--dimethylbenzimidazole phosphoribosyltransferase (351 aa).

The active-site Proton acceptor is the Glu317.

It belongs to the CobT family.

The catalysed reaction is 5,6-dimethylbenzimidazole + nicotinate beta-D-ribonucleotide = alpha-ribazole 5'-phosphate + nicotinate + H(+). Its pathway is nucleoside biosynthesis; alpha-ribazole biosynthesis; alpha-ribazole from 5,6-dimethylbenzimidazole: step 1/2. Catalyzes the synthesis of alpha-ribazole-5'-phosphate from nicotinate mononucleotide (NAMN) and 5,6-dimethylbenzimidazole (DMB). This Pseudomonas putida (strain ATCC 700007 / DSM 6899 / JCM 31910 / BCRC 17059 / LMG 24140 / F1) protein is Nicotinate-nucleotide--dimethylbenzimidazole phosphoribosyltransferase.